The chain runs to 222 residues: Cytidylate kinase (222 aa).

7–15 (GPSASGKST) is an ATP binding site.

The protein belongs to the cytidylate kinase family. Type 1 subfamily.

Its subcellular location is the cytoplasm. It catalyses the reaction CMP + ATP = CDP + ADP. It carries out the reaction dCMP + ATP = dCDP + ADP. The polypeptide is Cytidylate kinase (Aquifex aeolicus (strain VF5)).